A 509-amino-acid chain; its full sequence is L-arabinose isomerase (509 aa).

The Mn(2+) site is built by glutamate 313, glutamate 340, histidine 357, and histidine 456.

This sequence belongs to the arabinose isomerase family. The cofactor is Mn(2+).

The catalysed reaction is beta-L-arabinopyranose = L-ribulose. It participates in carbohydrate degradation; L-arabinose degradation via L-ribulose; D-xylulose 5-phosphate from L-arabinose (bacterial route): step 1/3. Catalyzes the conversion of L-arabinose to L-ribulose. This is L-arabinose isomerase from Phocaeicola vulgatus (strain ATCC 8482 / DSM 1447 / JCM 5826 / CCUG 4940 / NBRC 14291 / NCTC 11154) (Bacteroides vulgatus).